A 254-amino-acid polypeptide reads, in one-letter code: Metallo-beta-lactamase type 2 (254 aa).

Positions 1–27 (MMKGWMKCGLAGAVVLMASFWGGSVRA) are cleaved as a signal peptide. Asp99 is a binding site for Zn(2+). 2 residues coordinate substrate: Thr135 and His174. Residue Cys193 coordinates Zn(2+). 2 residues coordinate substrate: Lys196 and Asn201. Zn(2+) is bound at residue His231.

This sequence belongs to the metallo-beta-lactamase superfamily. Class-B beta-lactamase family. As to quaternary structure, monomer. Zn(2+) serves as cofactor.

Its subcellular location is the periplasm. The catalysed reaction is a beta-lactam + H2O = a substituted beta-amino acid. Its activity is regulated as follows. Competitively inhibited by mercaptophosphonate and pyridine carboxylate derivatives. Also inhibited by the binding of a second zinc ion and by chelating agents such as EDTA. Functionally, confers resistance to the different beta-lactams antibiotics (penicillin, cephalosporin and carbapenem) via the hydrolysis of the beta-lactam ring. It is able to hydrolyze penicillin and imipenem, but is much less active against cephalothin, cefotaxime, meropenem and ceftazidime. This chain is Metallo-beta-lactamase type 2, found in Aeromonas hydrophila.